We begin with the raw amino-acid sequence, 284 residues long: Pantothenate synthetase (284 aa).

30-37 contacts ATP; that stretch reads MGNLHDGH. Catalysis depends on His-37, which acts as the Proton donor. Gln-61 contacts (R)-pantoate. Gln-61 provides a ligand contact to beta-alanine. 149-152 is a binding site for ATP; that stretch reads GEKD. Gln-155 contributes to the (R)-pantoate binding site. ATP is bound by residues Val-178 and 186-189; that span reads LSSR.

It belongs to the pantothenate synthetase family. As to quaternary structure, homodimer.

The protein localises to the cytoplasm. It catalyses the reaction (R)-pantoate + beta-alanine + ATP = (R)-pantothenate + AMP + diphosphate + H(+). The protein operates within cofactor biosynthesis; (R)-pantothenate biosynthesis; (R)-pantothenate from (R)-pantoate and beta-alanine: step 1/1. Functionally, catalyzes the condensation of pantoate with beta-alanine in an ATP-dependent reaction via a pantoyl-adenylate intermediate. This Photorhabdus laumondii subsp. laumondii (strain DSM 15139 / CIP 105565 / TT01) (Photorhabdus luminescens subsp. laumondii) protein is Pantothenate synthetase.